A 336-amino-acid polypeptide reads, in one-letter code: UDP-N-acetylmuramoylpentapeptide-lysine N(6)-alanyltransferase (336 aa).

Residues 37–40, Tyr104, Arg212, Tyr216, and Tyr257 contribute to the substrate site; that span reads KNNW.

Belongs to the FemABX family.

The enzyme catalyses UDP-N-acetyl-alpha-D-muramoyl-L-alanyl-gamma-D-glutamyl-L-lysyl-D-alanyl-D-alanine + L-alanyl-tRNA(Ala) = UDP-N-acetyl-alpha-D-muramoyl-L-alanyl-gamma-D-glutamyl-N(6)-(L-alanyl)-L-lysyl-D-alanyl-D-alanine + tRNA(Ala) + H(+). Functionally, involved in the synthesis of the bacterial cell wall. Catalyzes the addition of alanine into the interchain peptide bridge of peptidoglycan precursor using aminoacyl-tRNA(Ala) as amino acid donor. This alanine is added to the epsilon-amino group of the L-lysine of the peptidoglycan UDP-N-acetyl-alpha-D-muramoyl-L-alanyl-D-glutamyl-L-lysyl-D-alanyl-D-alanine, in a ribosome-independent mechanism. Specific for UDP-N-acetyl-muramoyl-pentapeptide. Has no activity toward UDP-N-acetyl-muramoyl-tetrapeptide or UDP-N-acetyl-muramoyl-tripeptide. Also acts on L-seryl-tRNA(Ser). In Weissella viridescens (Lactobacillus viridescens), this protein is UDP-N-acetylmuramoylpentapeptide-lysine N(6)-alanyltransferase.